The sequence spans 228 residues: Large ribosomal subunit protein uL4 (228 aa).

Disordered regions lie at residues 45-102 and 208-228; these read GRQG…SQRT and PAKG…EANQ. Positions 208 to 221 are enriched in low complexity; the sequence is PAKGKTAKAAATSG.

Belongs to the universal ribosomal protein uL4 family. Part of the 50S ribosomal subunit.

In terms of biological role, one of the primary rRNA binding proteins, this protein initially binds near the 5'-end of the 23S rRNA. It is important during the early stages of 50S assembly. It makes multiple contacts with different domains of the 23S rRNA in the assembled 50S subunit and ribosome. Its function is as follows. Forms part of the polypeptide exit tunnel. This chain is Large ribosomal subunit protein uL4, found in Saccharopolyspora erythraea (strain ATCC 11635 / DSM 40517 / JCM 4748 / NBRC 13426 / NCIMB 8594 / NRRL 2338).